A 536-amino-acid chain; its full sequence is MELSSPSREECPRPQGRVGIMAASLMGLLLLQAASWASGARPCSPKSFGYSSVVCVCNATYCDSLDPLTLPDPGTFSRFESTRSGRRMELSLGTFQANRTSKGLLLTLQPDQKFQKVKGFGGAMTDAAALNILALSPQARNLLLKSYFSEEGIEYNIIRVPMASCDFSIRIYTYADTPDDFQLLNFSLPEEDVKLKIPLIHQALKMAQRPVSLFASPWTSPTWLKTNGAVNGKGTLKGHPGDRYHQTWAKYFVKFLDAYAEHNLHFWAVTAENEPSAGLFTGYPFQCLGFTPEHQRDFIARDPGPTLANSTHRNVRLLMLDDQRLLLPHWAQVVLADPEAAKYVHGIAVHWYLDFLAPAKATLGETHRLFPNTMLFASEACVGSKFWEQSVRLGSWDRGVQYSHSIITNLLYHVVGWTDWNLALNPEGGPNWVRNFVDSPIIVDISKDTFYKQPMFYHLGHFSKFIPEGSQRVGLAASEKNNLDTVALLRPDGSAVVVVLNRSSKDVPLTIKDPALGFLETISPSYSIHTYLWHRK.

The first 39 residues, 1–39, serve as a signal peptide directing secretion; that stretch reads MELSSPSREECPRPQGRVGIMAASLMGLLLLQAASWASG. Intrachain disulfides connect C43–C55 and C57–C62. N58, N98, and N185 each carry an N-linked (GlcNAc...) asparagine glycan. E274 functions as the Proton donor in the catalytic mechanism. A glycan (N-linked (GlcNAc...) asparagine) is linked at N309. Catalysis depends on E379, which acts as the Nucleophile. The N-linked (GlcNAc...) asparagine glycan is linked to N501.

This sequence belongs to the glycosyl hydrolase 30 family. In terms of assembly, interacts with saposin-C. Interacts with SCARB2. Interacts with TCP1. Interacts with GRN; this interaction prevents aggregation of GBA1-SCARB2 complex via interaction with HSPA1A upon stress.

It is found in the lysosome membrane. It carries out the reaction a beta-D-glucosyl-(1&lt;-&gt;1')-N-acylsphing-4-enine + H2O = an N-acylsphing-4-enine + D-glucose. The catalysed reaction is a beta-D-galactosyl-(1&lt;-&gt;1')-N-acylsphing-4-enine + H2O = an N-acylsphing-4-enine + D-galactose. It catalyses the reaction cholesteryl 3-beta-D-glucoside + H2O = cholesterol + D-glucose. The enzyme catalyses a beta-D-glucosyl-(1&lt;-&gt;1')-N-acylsphing-4-enine + cholesterol = cholesteryl 3-beta-D-glucoside + an N-acylsphing-4-enine. It carries out the reaction beta-D-glucosyl-N-(9Z-octadecenoyl)-sphing-4E-enine + cholesterol = N-(9Z-octadecenoyl)-sphing-4-enine + cholesteryl 3-beta-D-glucoside. The catalysed reaction is beta-D-glucosyl-N-octanoylsphing-4E-enine + cholesterol = N-octanoylsphing-4-enine + cholesteryl 3-beta-D-glucoside. It catalyses the reaction beta-D-glucosyl-N-dodecanoylsphing-4-enine + cholesterol = N-dodecanoylsphing-4-enine + cholesteryl 3-beta-D-glucoside. The enzyme catalyses beta-D-glucosyl-(1&lt;-&gt;1)-N-octadecanoylsphing-4-enine + cholesterol = N-octadecanoylsphing-4-enine + cholesteryl 3-beta-D-glucoside. It carries out the reaction beta-D-glucosyl-(1&lt;-&gt;1')-N-(15Z-tetracosenoyl)-sphing-4-enine + cholesterol = N-(15Z-tetracosenoyl)-sphing-4-enine + cholesteryl 3-beta-D-glucoside. The catalysed reaction is a beta-D-galactosyl-(1&lt;-&gt;1')-N-acylsphing-4-enine + cholesterol = cholesteryl 3-beta-D-galactoside + an N-acylsphing-4-enine. It catalyses the reaction 1-(beta-D-galactosyl)-N-dodecanoylsphing-4-enine + cholesterol = cholesteryl 3-beta-D-galactoside + N-dodecanoylsphing-4-enine. The enzyme catalyses a beta-D-xylosyl-(1&lt;-&gt;1')-N-acylsphing-4-enine + cholesterol = cholesteryl 3-beta-D-xyloside + an N-acylsphing-4-enine. It carries out the reaction beta-D-xylosyl-(1&lt;-&gt;1')-N-(9Z-octadecenoyl)-sphing-4-enine + cholesterol = cholesteryl 3-beta-D-xyloside + N-(9Z-octadecenoyl)-sphing-4-enine. It functions in the pathway steroid metabolism; cholesterol metabolism. The protein operates within sphingolipid metabolism. Functionally, glucosylceramidase that catalyzes, within the lysosomal compartment, the hydrolysis of glucosylceramides/GlcCers (such as beta-D-glucosyl-(1&lt;-&gt;1')-N-acylsphing-4-enine) into free ceramides (such as N-acylsphing-4-enine) and glucose. Plays a central role in the degradation of complex lipids and the turnover of cellular membranes. Through the production of ceramides, participates in the PKC-activated salvage pathway of ceramide formation. Catalyzes the glucosylation of cholesterol, through a transglucosylation reaction where glucose is transferred from GlcCer to cholesterol. GlcCer containing mono-unsaturated fatty acids (such as beta-D-glucosyl-N-(9Z-octadecenoyl)-sphing-4-enine) are preferred as glucose donors for cholesterol glucosylation when compared with GlcCer containing same chain length of saturated fatty acids (such as beta-D-glucosyl-N-octadecanoyl-sphing-4-enine). Under specific conditions, may alternatively catalyze the reverse reaction, transferring glucose from cholesteryl 3-beta-D-glucoside to ceramide. Can also hydrolyze cholesteryl 3-beta-D-glucoside producing glucose and cholesterol. Catalyzes the hydrolysis of galactosylceramides/GalCers (such as beta-D-galactosyl-(1&lt;-&gt;1')-N-acylsphing-4-enine), as well as the transfer of galactose between GalCers and cholesterol in vitro, but with lower activity than with GlcCers. Contrary to GlcCer and GalCer, xylosylceramide/XylCer (such as beta-D-xyosyl-(1&lt;-&gt;1')-N-acylsphing-4-enine) is not a good substrate for hydrolysis, however it is a good xylose donor for transxylosylation activity to form cholesteryl 3-beta-D-xyloside. In Sus scrofa (Pig), this protein is Lysosomal acid glucosylceramidase (GBA1).